The chain runs to 49 residues: Light-harvesting protein B800/850/890 alpha-3 chain (49 aa).

At 1-14 the chain is on the cytoplasmic side; that stretch reads MNQARIWLVVKPSV. A helical transmembrane segment spans residues 15–35; that stretch reads GLPLLLGVVLLIALLVHGAIL. Position 31 (histidine 31) interacts with a bacteriochlorophyll. At 36–49 the chain is on the periplasmic side; it reads TNTSWYPTYFEGNW.

It belongs to the antenna complex alpha subunit family. The core complex is formed by different alpha and beta chains, binding bacteriochlorophyll molecules, and arranged most probably in tetrameric structures disposed around the reaction center. The non-pigmented gamma chains may constitute additional components.

The protein resides in the cell inner membrane. In terms of biological role, antenna complexes are light-harvesting systems, which transfer the excitation energy to the reaction centers. In Halorhodospira halophila (strain DSM 244 / SL1) (Ectothiorhodospira halophila (strain DSM 244 / SL1)), this protein is Light-harvesting protein B800/850/890 alpha-3 chain.